Here is a 428-residue protein sequence, read N- to C-terminus: Histidine--tRNA ligase (428 aa).

Belongs to the class-II aminoacyl-tRNA synthetase family. In terms of assembly, homodimer.

It is found in the cytoplasm. It catalyses the reaction tRNA(His) + L-histidine + ATP = L-histidyl-tRNA(His) + AMP + diphosphate + H(+). The chain is Histidine--tRNA ligase from Buchnera aphidicola subsp. Schizaphis graminum (strain Sg).